The sequence spans 260 residues: uncharacterized protein (260 aa).

Belongs to the MG032/MG096/MG288 family.

This is an uncharacterized protein from Mycoplasma pneumoniae (strain ATCC 29342 / M129 / Subtype 1) (Mycoplasmoides pneumoniae).